The following is a 297-amino-acid chain: Inosose dehydratase (297 aa).

This sequence belongs to the IolE/MocC family. It depends on glutathione as a cofactor. Co(2+) serves as cofactor. The cofactor is Mn(2+).

The catalysed reaction is scyllo-inosose = 3D-3,5/4-trihydroxycyclohexane-1,2-dione + H2O. The protein operates within polyol metabolism; myo-inositol degradation into acetyl-CoA; acetyl-CoA from myo-inositol: step 2/7. Catalyzes the dehydration of inosose (2-keto-myo-inositol, 2KMI or 2,4,6/3,5-pentahydroxycyclohexanone) to 3D-(3,5/4)-trihydroxycyclohexane-1,2-dione (D-2,3-diketo-4-deoxy-epi-inositol). This chain is Inosose dehydratase, found in Clostridium perfringens (strain 13 / Type A).